Here is a 193-residue protein sequence, read N- to C-terminus: dCTP deaminase (193 aa).

DCTP is bound by residues 110 to 115, aspartate 128, 136 to 138, tyrosine 171, lysine 178, and glutamine 182; these read RSSLAR and VLE. Catalysis depends on glutamate 138, which acts as the Proton donor/acceptor. The tract at residues 169 to 193 is disordered; the sequence is RPYNRRQDAKYRDQQGAVASRIDKD.

It belongs to the dCTP deaminase family. In terms of assembly, homotrimer.

The enzyme catalyses dCTP + H2O + H(+) = dUTP + NH4(+). Its pathway is pyrimidine metabolism; dUMP biosynthesis; dUMP from dCTP (dUTP route): step 1/2. In terms of biological role, catalyzes the deamination of dCTP to dUTP. The protein is dCTP deaminase of Salmonella arizonae (strain ATCC BAA-731 / CDC346-86 / RSK2980).